Here is a 287-residue protein sequence, read N- to C-terminus: Mu-like prophage FluMu DNA transposition protein B (287 aa).

Positions 7–62 (LKQHLSDSQITQAQLAREAGVNAGALSAYLNDNYKGNIADVEAKLAAYLEKKAVQA) constitute an HTH cro/C1-type domain. Residues 18–37 (QAQLAREAGVNAGALSAYLN) constitute a DNA-binding region (H-T-H motif). 98 to 105 (GMSGVGKT) serves as a coordination point for ATP.

In terms of biological role, this protein is a non-specific DNA-binding and ATP-hydrolyzing protein essential for bacteriophage integration and replication. This is Mu-like prophage FluMu DNA transposition protein B from Haemophilus influenzae (strain ATCC 51907 / DSM 11121 / KW20 / Rd).